The primary structure comprises 155 residues: RNA pyrophosphohydrolase (155 aa).

The Nudix hydrolase domain occupies 5-147 (KYRPNVAAII…KRQVYRQVIA (143 aa)). A Nudix box motif is present at residues 42–63 (GGIDEGETPLEALHRELLEEIG).

Belongs to the Nudix hydrolase family. RppH subfamily. A divalent metal cation serves as cofactor.

Accelerates the degradation of transcripts by removing pyrophosphate from the 5'-end of triphosphorylated RNA, leading to a more labile monophosphorylated state that can stimulate subsequent ribonuclease cleavage. This is RNA pyrophosphohydrolase from Helicobacter pylori (strain G27).